Consider the following 147-residue polypeptide: MSNDHPQGQLPASPARSALKGYLYVLGSILLVTAAQLGMKWGVIQLPTWQMDLAVMLAHPLPLLVILAGVGCYALSLLCWLAALHSTPLNIAYPLLSTSYALVYLLAVNIPLFAEPLEPGKALGVLFILLGAVLVGIKPAAGTKQTG.

Over 1 to 23 (MSNDHPQGQLPASPARSALKGYL) the chain is Cytoplasmic. Residues 24–44 (YVLGSILLVTAAQLGMKWGVI) traverse the membrane as a helical segment. The Periplasmic segment spans residues 45–62 (QLPTWQMDLAVMLAHPLP). The chain crosses the membrane as a helical span at residues 63–83 (LLVILAGVGCYALSLLCWLAA). Topologically, residues 84-93 (LHSTPLNIAY) are cytoplasmic. Residues 94–114 (PLLSTSYALVYLLAVNIPLFA) traverse the membrane as a helical segment. Residues 115–121 (EPLEPGK) lie on the Periplasmic side of the membrane. Residues 122–142 (ALGVLFILLGAVLVGIKPAAG) traverse the membrane as a helical segment. Over 143–147 (TKQTG) the chain is Cytoplasmic.

Belongs to the ArnF family. In terms of assembly, heterodimer of ArnE and ArnF.

The protein resides in the cell inner membrane. The protein operates within bacterial outer membrane biogenesis; lipopolysaccharide biosynthesis. Functionally, translocates 4-amino-4-deoxy-L-arabinose-phosphoundecaprenol (alpha-L-Ara4N-phosphoundecaprenol) from the cytoplasmic to the periplasmic side of the inner membrane. This chain is Probable 4-amino-4-deoxy-L-arabinose-phosphoundecaprenol flippase subunit ArnF, found in Aeromonas hydrophila subsp. hydrophila (strain ATCC 7966 / DSM 30187 / BCRC 13018 / CCUG 14551 / JCM 1027 / KCTC 2358 / NCIMB 9240 / NCTC 8049).